Here is a 624-residue protein sequence, read N- to C-terminus: Chaperone protein HtpG (624 aa).

An a; substrate-binding region spans residues 1–336 (MKGQETRGFQ…SSDLPLNVSR (336 aa)). The segment at 337-552 (EILQDSTVTR…ADEMSTQMAK (216 aa)) is b. The segment at 553 to 624 (LFAAAGQKVP…IRRMNQLLVS (72 aa)) is c.

It belongs to the heat shock protein 90 family. In terms of assembly, homodimer.

It localises to the cytoplasm. Molecular chaperone. Has ATPase activity. This Escherichia coli O1:K1 / APEC protein is Chaperone protein HtpG.